Consider the following 585-residue polypeptide: Acetolactate synthase large subunit (585 aa).

Residue glutamate 60 participates in thiamine diphosphate binding. Residues arginine 162, histidine 272–arginine 293, and aspartate 315–aspartate 334 each bind FAD. Residues glutamine 407–tryptophan 486 form a thiamine pyrophosphate binding region. 2 residues coordinate Mg(2+): aspartate 457 and asparagine 484.

It belongs to the TPP enzyme family. As to quaternary structure, dimer of large and small chains. It depends on Mg(2+) as a cofactor. The cofactor is thiamine diphosphate.

It localises to the plastid. The protein resides in the chloroplast. The catalysed reaction is 2 pyruvate + H(+) = (2S)-2-acetolactate + CO2. It functions in the pathway amino-acid biosynthesis; L-isoleucine biosynthesis; L-isoleucine from 2-oxobutanoate: step 1/4. It participates in amino-acid biosynthesis; L-valine biosynthesis; L-valine from pyruvate: step 1/4. The protein is Acetolactate synthase large subunit (ilvB) of Cyanidium caldarium (Red alga).